Consider the following 295-residue polypeptide: Cytidine deaminase (295 aa).

CMP/dCMP-type deaminase domains lie at 48-168 and 187-295; these read EDSD…FGPA and DDDE…YLSL. Residue 89-91 participates in substrate binding; that stretch reads NME. His102 is a binding site for Zn(2+). Glu104 acts as the Proton donor in catalysis. Zn(2+)-binding residues include Cys129 and Cys132.

It belongs to the cytidine and deoxycytidylate deaminase family. As to quaternary structure, homodimer. Zn(2+) serves as cofactor.

The catalysed reaction is cytidine + H2O + H(+) = uridine + NH4(+). It catalyses the reaction 2'-deoxycytidine + H2O + H(+) = 2'-deoxyuridine + NH4(+). Its function is as follows. This enzyme scavenges exogenous and endogenous cytidine and 2'-deoxycytidine for UMP synthesis. This is Cytidine deaminase from Vibrio cholerae serotype O1 (strain ATCC 39541 / Classical Ogawa 395 / O395).